We begin with the raw amino-acid sequence, 309 residues long: Ribosomal RNA small subunit methyltransferase H (309 aa).

Residues Gly33–His35, Asp53, Phe79, Asp100, and Gln107 contribute to the S-adenosyl-L-methionine site.

Belongs to the methyltransferase superfamily. RsmH family.

It is found in the cytoplasm. It catalyses the reaction cytidine(1402) in 16S rRNA + S-adenosyl-L-methionine = N(4)-methylcytidine(1402) in 16S rRNA + S-adenosyl-L-homocysteine + H(+). Its function is as follows. Specifically methylates the N4 position of cytidine in position 1402 (C1402) of 16S rRNA. In Clostridium botulinum (strain Langeland / NCTC 10281 / Type F), this protein is Ribosomal RNA small subunit methyltransferase H.